The chain runs to 177 residues: Large ribosomal subunit protein uL6 (177 aa).

The protein belongs to the universal ribosomal protein uL6 family. In terms of assembly, part of the 50S ribosomal subunit.

This protein binds to the 23S rRNA, and is important in its secondary structure. It is located near the subunit interface in the base of the L7/L12 stalk, and near the tRNA binding site of the peptidyltransferase center. The protein is Large ribosomal subunit protein uL6 of Rhizorhabdus wittichii (strain DSM 6014 / CCUG 31198 / JCM 15750 / NBRC 105917 / EY 4224 / RW1) (Sphingomonas wittichii).